A 275-amino-acid polypeptide reads, in one-letter code: Ribosomal RNA small subunit methyltransferase A (275 aa).

S-adenosyl-L-methionine is bound by residues asparagine 19, leucine 21, glycine 46, glutamate 71, aspartate 94, and asparagine 117.

It belongs to the class I-like SAM-binding methyltransferase superfamily. rRNA adenine N(6)-methyltransferase family. RsmA subfamily.

It is found in the cytoplasm. It carries out the reaction adenosine(1518)/adenosine(1519) in 16S rRNA + 4 S-adenosyl-L-methionine = N(6)-dimethyladenosine(1518)/N(6)-dimethyladenosine(1519) in 16S rRNA + 4 S-adenosyl-L-homocysteine + 4 H(+). Functionally, specifically dimethylates two adjacent adenosines (A1518 and A1519) in the loop of a conserved hairpin near the 3'-end of 16S rRNA in the 30S particle. May play a critical role in biogenesis of 30S subunits. This chain is Ribosomal RNA small subunit methyltransferase A, found in Burkholderia pseudomallei (strain 668).